The following is a 188-amino-acid chain: Elongation factor P (188 aa).

It belongs to the elongation factor P family.

Its subcellular location is the cytoplasm. It functions in the pathway protein biosynthesis; polypeptide chain elongation. In terms of biological role, involved in peptide bond synthesis. Stimulates efficient translation and peptide-bond synthesis on native or reconstituted 70S ribosomes in vitro. Probably functions indirectly by altering the affinity of the ribosome for aminoacyl-tRNA, thus increasing their reactivity as acceptors for peptidyl transferase. This chain is Elongation factor P, found in Caulobacter vibrioides (strain ATCC 19089 / CIP 103742 / CB 15) (Caulobacter crescentus).